The sequence spans 156 residues: Small ribosomal subunit protein uS7 (156 aa).

Belongs to the universal ribosomal protein uS7 family. Part of the 30S ribosomal subunit. Contacts proteins S9 and S11.

Its function is as follows. One of the primary rRNA binding proteins, it binds directly to 16S rRNA where it nucleates assembly of the head domain of the 30S subunit. Is located at the subunit interface close to the decoding center, probably blocks exit of the E-site tRNA. The sequence is that of Small ribosomal subunit protein uS7 from Psychromonas ingrahamii (strain DSM 17664 / CCUG 51855 / 37).